The chain runs to 456 residues: Kynurenine 3-monooxygenase (456 aa).

Belongs to the aromatic-ring hydroxylase family. KMO subfamily. FAD serves as cofactor.

It carries out the reaction L-kynurenine + NADPH + O2 + H(+) = 3-hydroxy-L-kynurenine + NADP(+) + H2O. It participates in cofactor biosynthesis; NAD(+) biosynthesis; quinolinate from L-kynurenine: step 1/3. Its function is as follows. Catalyzes the hydroxylation of L-kynurenine (L-Kyn) to form 3-hydroxy-L-kynurenine (L-3OHKyn). Required for synthesis of quinolinic acid. The chain is Kynurenine 3-monooxygenase from Xanthomonas campestris pv. campestris (strain 8004).